The primary structure comprises 901 residues: Aconitate hydratase A (901 aa).

Residues Cys443, Cys509, and Cys512 each contribute to the [4Fe-4S] cluster site.

The protein belongs to the aconitase/IPM isomerase family. In terms of assembly, monomer. It depends on [4Fe-4S] cluster as a cofactor.

The catalysed reaction is citrate = D-threo-isocitrate. The enzyme catalyses (2S,3R)-3-hydroxybutane-1,2,3-tricarboxylate = 2-methyl-cis-aconitate + H2O. It functions in the pathway carbohydrate metabolism; tricarboxylic acid cycle; isocitrate from oxaloacetate: step 2/2. The protein operates within organic acid metabolism; propanoate degradation. Its function is as follows. Involved in the catabolism of short chain fatty acids (SCFA) via the tricarboxylic acid (TCA)(acetyl degradation route) and probably the 2-methylcitrate cycle I (propionate degradation route). Catalyzes the reversible isomerization of citrate to isocitrate via cis-aconitate. Could catalyze the hydration of 2-methyl-cis-aconitate to yield (2R,3S)-2-methylisocitrate. The apo form of AcnA functions as a RNA-binding regulatory protein. This Staphylococcus epidermidis (strain ATCC 12228 / FDA PCI 1200) protein is Aconitate hydratase A (acnA).